The sequence spans 349 residues: Interferon-stimulated 20 kDa exonuclease-like 2 (349 aa).

Disordered stretches follow at residues 1-100 and 126-166; these read MSTL…AAVP and ALPK…KYSG. Over residues 14–23 the composition is skewed to basic and acidic residues; the sequence is PPKKALEGNA. Positions 24-47 are enriched in basic residues; it reads KHRKFVKKRRLLERKGFLNKKKQP. Residues 54-66 show a composition bias toward basic and acidic residues; sequence LHSEPSQKGETPR. A compositionally biased stretch (low complexity) spans 70 to 87; sequence TWKATPLPKKKTTAASSS. Over residues 130–142 the composition is skewed to basic residues; that stretch reads IKSHPTRPQKKGS. One can recognise an Exonuclease domain in the interval 175–331; that stretch reads MVAIDCEMVG…EDAQATMELY (157 aa).

The protein resides in the nucleus. The protein localises to the nucleolus. Functionally, 3'-&gt; 5'-exoribonuclease involved in ribosome biogenesis in the processing of the 12S pre-rRNA. Displays a strong specificity for a 3'-end containing a free hydroxyl group. The sequence is that of Interferon-stimulated 20 kDa exonuclease-like 2 (ISG20L2) from Bos taurus (Bovine).